A 20-amino-acid chain; its full sequence is Citrate synthase (20 aa).

It belongs to the citrate synthase family. As to quaternary structure, homohexamer.

The catalysed reaction is oxaloacetate + acetyl-CoA + H2O = citrate + CoA + H(+). It participates in carbohydrate metabolism; tricarboxylic acid cycle; isocitrate from oxaloacetate: step 1/2. Its activity is regulated as follows. Allosterically inhibited by NADH. This is Citrate synthase (gltA) from Streptomyces hygroscopicus.